The sequence spans 215 residues: Cytochrome c biogenesis ATP-binding export protein CcmA (215 aa).

The ABC transporter domain occupies 8 to 215 (LQATALACER…RDLDLGQWSA (208 aa)). 40–47 (GPNGCGKT) is a binding site for ATP.

This sequence belongs to the ABC transporter superfamily. CcmA exporter (TC 3.A.1.107) family. In terms of assembly, the complex is composed of two ATP-binding proteins (CcmA) and two transmembrane proteins (CcmB).

The protein resides in the cell inner membrane. It carries out the reaction heme b(in) + ATP + H2O = heme b(out) + ADP + phosphate + H(+). Part of the ABC transporter complex CcmAB involved in the biogenesis of c-type cytochromes; once thought to export heme, this seems not to be the case, but its exact role is uncertain. Responsible for energy coupling to the transport system. This chain is Cytochrome c biogenesis ATP-binding export protein CcmA, found in Pseudomonas syringae pv. syringae (strain B728a).